We begin with the raw amino-acid sequence, 400 residues long: Acetate kinase (400 aa).

A Mg(2+)-binding site is contributed by N9. An ATP-binding site is contributed by K16. Residue R90 coordinates substrate. The Proton donor/acceptor role is filled by D147. ATP contacts are provided by residues 207–211 (HIGNG), 282–284 (DLR), and 330–334 (GIGEN). E385 contacts Mg(2+).

Belongs to the acetokinase family. In terms of assembly, homodimer. Mg(2+) serves as cofactor. It depends on Mn(2+) as a cofactor.

Its subcellular location is the cytoplasm. The catalysed reaction is acetate + ATP = acetyl phosphate + ADP. It functions in the pathway metabolic intermediate biosynthesis; acetyl-CoA biosynthesis; acetyl-CoA from acetate: step 1/2. Catalyzes the formation of acetyl phosphate from acetate and ATP. Can also catalyze the reverse reaction. This chain is Acetate kinase, found in Staphylococcus aureus (strain USA300).